The primary structure comprises 89 residues: Small ribosomal subunit protein uS15 (89 aa).

It belongs to the universal ribosomal protein uS15 family. As to quaternary structure, part of the 30S ribosomal subunit. Forms a bridge to the 50S subunit in the 70S ribosome, contacting the 23S rRNA.

In terms of biological role, one of the primary rRNA binding proteins, it binds directly to 16S rRNA where it helps nucleate assembly of the platform of the 30S subunit by binding and bridging several RNA helices of the 16S rRNA. Functionally, forms an intersubunit bridge (bridge B4) with the 23S rRNA of the 50S subunit in the ribosome. The polypeptide is Small ribosomal subunit protein uS15 (Pseudarthrobacter chlorophenolicus (strain ATCC 700700 / DSM 12829 / CIP 107037 / JCM 12360 / KCTC 9906 / NCIMB 13794 / A6) (Arthrobacter chlorophenolicus)).